We begin with the raw amino-acid sequence, 351 residues long: Terpene cyclase sdgD (351 aa).

A run of 9 helical transmembrane segments spans residues 7 to 27, 62 to 82, 89 to 109, 126 to 146, 160 to 180, 193 to 213, 229 to 249, 281 to 301, and 316 to 336; these read INFI…TILI, TGVP…WPVI, LSLL…LLLL, WVGL…YCAI, IPHV…LVAL, VVVA…FMAS, IYIF…LASL, FLQW…VAVY, and LEVC…LLIW.

Belongs to the membrane-bound ascI terpene cyclase family.

It is found in the membrane. Its pathway is secondary metabolite biosynthesis. Functionally, epoxide hydrolase; part of the gene cluster that mediates the biosynthesis of the polyenes aspernidgulenes. The carbon backbone of aspernidgulenes is synthesized by the HR-PKS sdgA, which accepts acetyl-CoA as the starter unit and performs malonyl-CoA extensions as well as regioselective methylation and reduction. The resulting nonaketide offloads the HR-PKS by intramolecular lactonization to yield the 5,6-dihydro-alpha-pyrone-containing hexaenoic acids preaspernidgulene A1 and A2. The FAD-dependent monooxygenase sdgC then installs the first epoxide on the penultimate double bond. Subsequently, the FAD-dependent monooxygenase sdgF presumably generates a ketone intermediate through Meinwald rearrangement involving a hydride shift. Next, sdgC introduces another epoxide on the last olefin of the ketone intermediate after E/Z isomerization. The epoxide hydrolase sdgD then catalyzes stereospecific cyclization of the 5,6-dihydro-alpha-pyrone and opening of the epoxide ring to form an oxygenated trimethylcyclopentanone and an oxabicyclo[2.2.1]heptane unit. Finally, the bicyclic unit undergoes hydrolytic cleavage, either spontaneously or catalyzed by sdgD, to assemble the dimethyl-gamma-lactone moiety in aspernidgulene A1. This is Terpene cyclase sdgD from Emericella nidulans (strain FGSC A4 / ATCC 38163 / CBS 112.46 / NRRL 194 / M139) (Aspergillus nidulans).